The following is a 424-amino-acid chain: Circumsporozoite protein (424 aa).

Positions 1 to 18 (MMRKLAILSVSSFLFVEA) are cleaved as a signal peptide. Positions 69-339 (SRSLGENDDG…VKNNNNEEPS (271 aa)) are disordered. The span at 85 to 106 (NNREGKDEDKRDGNNEDNETLR) shows a compositional bias: basic and acidic residues. A required for the binding to heparan sulfate proteoglycans (HSPGs) on the surface of host hepatocytes region spans residues 104–111 (TLRKPKHK). The tract at residues 112–116 (KLKQP) is region I; contains the proteolytic cleavage site. The span at 120–300 (NPDPNANPNV…PNANPNANPN (181 aa)) shows a compositional bias: low complexity. Repeat copies occupy residues 123 to 126 (PNAN), 127 to 130 (PNVD), 131 to 134 (PNAN), 135 to 138 (PNVD), 139 to 142 (PNAN), 143 to 146 (PNVD), 147 to 150 (PNAN), 151 to 154 (PNAN), 155 to 158 (PNAN), 159 to 162 (PNAN), 163 to 166 (PNAN), 167 to 170 (PNAN), 171 to 174 (PNAN), 175 to 178 (PNAN), 179 to 182 (PNAN), 183 to 186 (PNAN), 187 to 190 (PNAN), 191 to 194 (PNAN), 195 to 198 (PNAN), 199 to 202 (PNAN), 203 to 206 (PNAN), 207 to 210 (PNAN), 211 to 214 (PNAN), 215 to 218 (PNAN), 219 to 222 (PNAN), 223 to 226 (PNAN), 227 to 230 (PNAN), 231 to 234 (PNAN), 235 to 238 (PNAN), 239 to 242 (PNAN), 243 to 246 (PNAN), 247 to 250 (PNAN), 251 to 254 (PNAN), 255 to 258 (PNAN), 259 to 262 (PNAN), 263 to 266 (PNAN), 267 to 270 (PNAN), 271 to 274 (PNAN), 275 to 278 (PNAN), 279 to 282 (PNAN), 283 to 286 (PNAN), 287 to 290 (PNAN), 291 to 294 (PNAN), and 295 to 298 (PNAN). Residues 123 to 298 (PNANPNVDPN…ANPNANPNAN (176 aa)) are 44 X 4 AA tandem repeats of P-N-[AV]-[ND]. The segment covering 301 to 316 (KNNQGNGQGHNMPNDP) has biased composition (polar residues). Residues 322–336 (ENANANNAVKNNNNE) show a composition bias toward low complexity. Residues 349 to 402 (KIQNSLSTEWSPCSVTCGNGIQVRIKPGSANKPKDELDYENDIEKKICKMEKCS) enclose the TSP type-1 domain. 2 disulfides stabilise this stretch: cysteine 361–cysteine 396 and cysteine 365–cysteine 401. The O-linked (Fuc) threonine glycan is linked to threonine 364. The GPI-anchor amidated cysteine moiety is linked to residue cysteine 401. Residues 402-424 (SSVFNVVNSSIGLIMVLSFLFLN) constitute a propeptide, removed in mature form.

It belongs to the plasmodium circumsporozoite protein family. During host cell invasion, proteolytically cleaved at the cell membrane in the region I by a papain-like cysteine protease of parasite origin. Cleavage is triggered by the sporozoite contact with highly sulfated heparan sulfate proteoglycans (HSPGs) present on the host hepatocyte cell surface. Cleavage exposes the TSP type-1 (TSR) domain and is required for productive invasion of host hepatocytes but not for adhesion to the host cell membrane. Cleavage is dispensable for sporozoite development in the oocyst, motility and for traversal of host and vector cells. Post-translationally, O-glycosylated; maybe by POFUT2.

It is found in the cell membrane. The protein localises to the cytoplasm. Functionally, essential sporozoite protein. In the mosquito vector, required for sporozoite development in the oocyst, migration through the vector hemolymph and entry into the vector salivary glands. In the vertebrate host, required for sporozoite migration through the host dermis and infection of host hepatocytes. Binds to highly sulfated heparan sulfate proteoglycans (HSPGs) on the surface of host hepatocytes. Its function is as follows. In the vertebrate host, binds to highly sulfated heparan sulfate proteoglycans (HSPGs) on the surface of host hepatocytes and is required for sporozoite invasion of the host hepatocytes. The protein is Circumsporozoite protein of Plasmodium falciparum (isolate t4 / Thailand).